Consider the following 241-residue polypeptide: Triosephosphate isomerase (241 aa).

9–11 (NWK) contributes to the substrate binding site. The active-site Electrophile is His-96. Glu-165 (proton acceptor) is an active-site residue. Substrate is bound by residues Gly-171, Ser-204, and 225–226 (GG).

It belongs to the triosephosphate isomerase family. In terms of assembly, homodimer.

It is found in the cytoplasm. It carries out the reaction D-glyceraldehyde 3-phosphate = dihydroxyacetone phosphate. Its pathway is carbohydrate biosynthesis; gluconeogenesis. It participates in carbohydrate degradation; glycolysis; D-glyceraldehyde 3-phosphate from glycerone phosphate: step 1/1. Functionally, involved in the gluconeogenesis. Catalyzes stereospecifically the conversion of dihydroxyacetone phosphate (DHAP) to D-glyceraldehyde-3-phosphate (G3P). In Prochlorococcus marinus (strain MIT 9515), this protein is Triosephosphate isomerase.